We begin with the raw amino-acid sequence, 349 residues long: Two pore potassium channel b (349 aa).

Positions 1-53 (MAALDQQPLLHDGGDQKPPPEGAARRFRRCRTAPSSEPPPTDKDNSSAADAPP) are disordered. The Cytoplasmic portion of the chain corresponds to 1-66 (MAALDQQPLL…FTGGGRPSFR (66 aa)). Residues 67-87 (LVGLLLVAYLLLGTIAFYLAM) form a helical membrane-spanning segment. An intramembrane region (pore-forming) is located at residues 100-119 (DALYFCVVTMTTVGYGDLVP). The helical transmembrane segment at 123-143 (AAKLLACAFVFAGVAVVGTFL) threads the bilayer. The Cytoplasmic segment spans residues 144-180 (SKAADYLVEKQEALLFRALHSHTMVRAMEMNKVRYKL). A helical transmembrane segment spans residues 181-201 (YTAGLLLVAAVASGTVVLWKV). Residues 208–227 (DAFYCVCATVTTLGYGDRSF) constitute an intramembrane region (pore-forming). The helical transmembrane segment at 234–254 (AFAVAWITVSTVVVALFFLYA) threads the bilayer. Residues 255 to 349 (AELYTERRQR…PTPDPPPSLR (95 aa)) are Cytoplasmic-facing. EF-hand domains lie at 271–306 (LRRRTTNMDLEAADLDGDHRVGAADFVLYKLKELGK) and 310–345 (EDISEFLDEFDNLDADHSGTLSPADLAAAQPTPDPP). Ca(2+) contacts are provided by D284, D286, D288, R290, D295, D323, D325, S327, T329, and D334. The tract at residues 326-349 (HSGTLSPADLAAAQPTPDPPPSLR) is disordered.

Belongs to the two pore domain potassium channel (TC 1.A.1.7) family. Homodimer.

Its subcellular location is the vacuole membrane. Functionally, highly selective inward-rectifying potassium channel that is specifically located in the tonoplast of protein storage vacuoles. Functions independently of the voltage difference across the membrane. This Oryza sativa subsp. japonica (Rice) protein is Two pore potassium channel b (TPKB).